A 342-amino-acid polypeptide reads, in one-letter code: MAGDEPLPGDGQRRRYLIGYALAPKKQQSFIQPSLVSRAAGRGMDLVPVDPSRPLPEQGPFHLLIHKLYGEEWRGQLDAFSAAHPAVPVVDPPHAIDRLHNRISMLQVVSELDVPLHAHHHHTFGIPSQVVVYDAAALSDSGLLAALRFPLIAKPLVADGTAKSHKMSLVYHREGLRKLRPPLVLQEFVNHGGVIFKVYVVGAHVTCVKRRSLPDVSSDVLQDASAEGSLSFSQVSNLPNERTAQEYYDDMRLEDAIMPPTAFINDIAAALRRALGLHLFNFDMIRDARAGDRYLVIDINYFPGYAKMPGYETVLTDFFWEMVHKDDDTPNLNPNPNDEDVK.

The 1D-myo-inositol 1,3,4-trisphosphate site is built by Lys25 and Lys67. The ATP site is built by Arg102 and Lys154. 1D-myo-inositol 1,3,4-trisphosphate-binding residues include His165 and Lys197. ATP is bound by residues 186–197 (QEFVNHGGVIFK) and Ser212. Positions 283, 298, and 300 each coordinate Mg(2+). Position 300 (Asn300) interacts with 1D-myo-inositol 1,3,4-trisphosphate.

The protein belongs to the ITPK1 family. In terms of assembly, monomer. The cofactor is Mg(2+). Expressed in roots, leaves, flowers, anthers and embryos.

The catalysed reaction is 1D-myo-inositol 3,4,5,6-tetrakisphosphate + ATP = 1D-myo-inositol 1,3,4,5,6-pentakisphosphate + ADP + H(+). It catalyses the reaction 1D-myo-inositol 1,3,4-trisphosphate + ATP = 1D-myo-inositol 1,3,4,5-tetrakisphosphate + ADP + H(+). It carries out the reaction 1D-myo-inositol 1,3,4-trisphosphate + ATP = 1D-myo-inositol 1,3,4,6-tetrakisphosphate + ADP + H(+). Kinase that can phosphorylate various inositol polyphosphate such as Ins(3,4,5,6)P4 or Ins(1,3,4)P3 and participates in phytic acid biosynthesis in developing seeds. Phytic acid is the primary storage form of phosphorus in cereal grains and other plant seeds. In Oryza sativa subsp. japonica (Rice), this protein is Inositol-tetrakisphosphate 1-kinase 5 (ITPK5).